The chain runs to 102 residues: Small ribosomal subunit protein uS10 (102 aa).

The protein belongs to the universal ribosomal protein uS10 family. As to quaternary structure, part of the 30S ribosomal subunit.

In terms of biological role, involved in the binding of tRNA to the ribosomes. This Mesoplasma florum (strain ATCC 33453 / NBRC 100688 / NCTC 11704 / L1) (Acholeplasma florum) protein is Small ribosomal subunit protein uS10.